Here is a 1161-residue protein sequence, read N- to C-terminus: Voltage-gated inwardly rectifying potassium channel KCNH2 (1161 aa).

At 1–405 (MPVRRGHVAP…RIHRWTILHY (405 aa)) the chain is on the cytoplasmic side. A PAS domain is found at 17–88 (TIIRKFEGQS…AAQIAQALLG (72 aa)). One can recognise a PAC domain in the interval 92 to 144 (RKVEIAFYRKDGSCFLCLVDVVPVKNEDGAVIMFILNFEVVMEKDMVGSPARD). A disordered region spans residues 233–286 (ALVGSCSPPPPVSAPGPHPSLRAHSLNPDASGSSCSLARTRSRESCASVRRASS). Ser-239 and Ser-245 each carry phosphoserine. Positions 239 to 250 (SPPPPVSAPGPH) are enriched in pro residues. Positions 260 to 271 (PDASGSSCSLAR) are enriched in polar residues. Phosphoserine occurs at positions 285, 286, 322, and 353. Residues 406-426 (SPFKAVWDWLILLLVIYTAVF) form a helical membrane-spanning segment. Residues 427–452 (TPYSAAFLLKETEEGPPAPECGYACQ) lie on the Extracellular side of the membrane. The chain crosses the membrane as a helical span at residues 453–473 (PLAVVDLIVDIMFIVDILINF). Topologically, residues 474–497 (RTTYVNANEEVVSHPGRIAVHYFK) are cytoplasmic. A helical membrane pass occupies residues 498-518 (GWFLIDMVAAIPFDLLIFGSG). Topologically, residues 519-522 (SEEL) are extracellular. A helical; Voltage-sensor membrane pass occupies residues 523 to 543 (IGLLKTARLLRLVRVARKLDR). At 544–549 (YSEYGA) the chain is on the cytoplasmic side. Residues 550-570 (AVLLLLMCTFALIAHWLACIW) traverse the membrane as a helical segment. Residues 571–613 (YAIGNMEQPHMDSRIGWLHNLGDQMGKPYNSSGLGGPSIKDKY) are Extracellular-facing. Asn-600 carries an N-linked (GlcNAc...) asparagine glycan. An intramembrane region (pore-forming) is located at residues 614-634 (VTGLYFTFSSLTSVGFGNVSP). The Selectivity filter motif lies at 626-631 (SVGFGN). Residues 635–640 (NTNSEK) lie on the Extracellular side of the membrane. A helical membrane pass occupies residues 641–661 (IFSICVMLIGSLMYASIFGNV). The Cytoplasmic segment spans residues 662 to 1161 (SAIIQRLYSG…LHRHGSDPGS (500 aa)). The segment at 744-844 (PFRGATKDCL…IHRDDLLEVL (101 aa)) is cNMP-binding domain. The disordered stretch occupies residues 872–985 (GSPGSTEWEG…TEDCEKSSDT (114 aa)). A phosphoserine mark is found at Ser-873 and Ser-876. The span at 885 to 894 (RQRKRKLSFR) shows a compositional bias: basic residues. Residues 930 to 941 (GESPSSGPSSPE) show a composition bias toward low complexity. Positions 962 to 972 (SPRPPGEPPGG) are enriched in pro residues. Residue Arg-1016 is modified to Omega-N-methylarginine. Residues 1037 to 1064 (RGDVESRLDALQRQLNRLETRLSADMAT) are a coiled coil. The tract at residues 1121 to 1161 (ELPPGAPELPQEGPTRRLSLPGQLGALTSQPLHRHGSDPGS) is disordered. Residue Ser-1139 is modified to Phosphoserine.

The protein belongs to the potassium channel family. H (Eag) (TC 1.A.1.20) subfamily. Kv11.1/KCNH2 sub-subfamily. As to quaternary structure, the potassium channel is probably composed of a homo- or heterotetrameric complex of pore-forming alpha subunits that can associate with modulating beta subunits. Interacts with DNAJB12 and DNAJB14; chaperones DNAJB12 and DNAJB14 promote tetramerization. Heteromultimer with KCNH6/ERG2 and KCNH7/ERG3. Interacts with ALG10B. Forms a stable complex with KCNE1 or KCNE2, and that this heteromultimerization regulates Inward rectifier potassium channel activity. Interacts with CANX. The core-glycosylated, but not the fully glycosylated form interacts with RNF207. Interacts with NDFIP1 and NDFIP2; this interaction decreases the cell membrane expression by targeting KCNH2, through interaction with NEDD4L, for the degradation through the multivesicular bodies (MVBs)-lysosomal pathway. Phosphorylated on serine and threonine residues. Phosphorylation by PKA inhibits ion conduction. Detected in heart, both in atrium and in left ventricle.

The protein localises to the cell membrane. The enzyme catalyses K(+)(in) = K(+)(out). Pore-forming (alpha) subunit of voltage-gated inwardly rectifying potassium channel. Characterized by unusual gating kinetics by producing relatively small outward currents during membrane depolarization and large inward currents during subsequent repolarization which reflect a rapid inactivation during depolarization and quick recovery from inactivation but slow deactivation (closing) during repolarization. Channel properties are modulated by cAMP and subunit assembly. Forms a stable complex with KCNE1 or KCNE2, and that this heteromultimerization regulates inward rectifier potassium channel activity. This is Voltage-gated inwardly rectifying potassium channel KCNH2 from Oryctolagus cuniculus (Rabbit).